The chain runs to 536 residues: Potassium voltage-gated channel protein shk-1 (536 aa).

Disordered regions lie at residues 1–31 (MRFGGQRRCIESSDDNDSIDSMSIQQKNKEK) and 87–131 (AAEM…HPYT). At 1-275 (MRFGGQRRCI…EYPDSSLSAR (275 aa)) the chain is on the cytoplasmic side. Polar residues predominate over residues 116–131 (QRGTPDTSSTQGHPYT). The helical transmembrane segment at 276-296 (IIAFISIAVIALSIISFCWET) threads the bilayer. Residues 297 to 322 (VPSDIEEKPINNSATAELLDEMDEKH) are Extracellular-facing. Residues 323–343 (YSPFFWIELMCILWFTIELIL) form a helical membrane-spanning segment. The Cytoplasmic segment spans residues 344–356 (RFISCPCKVTFAT). A helical membrane pass occupies residues 357–377 (SVLNIIDFVAIAPFFVNFFFA). Residues 378 to 425 (DTSKSNSSMSFAVLRVLRLVRVFRVFKLSRHSVGLQILGKTFRSSVQE) lie on the Extracellular side of the membrane. Residues 426–446 (FCLLIFFMAIALVLFASGMYF) form a helical; Voltage-sensor membrane-spanning segment. Residues 447–458 (AEQGEPNSKFTS) lie on the Cytoplasmic side of the membrane. A helical membrane pass occupies residues 459–479 (IPASFWFVLVTMTTVGYGDLV). The Extracellular portion of the chain corresponds to 480–486 (PLSPFGK). The helical transmembrane segment at 487–507 (VVGGMCAMIGVLTLALPVPII) threads the bilayer. The Cytoplasmic segment spans residues 508–536 (VANFKHFYRQENRLASMKSKGDDADDDIA).

This sequence belongs to the potassium channel family. A (Shaker) (TC 1.A.1.2) subfamily. Shaker sub-subfamily. Expressed in a variety of interneurons and sensory neurons, as well as body wall muscle.

It is found in the membrane. Mediates the voltage-dependent potassium ion permeability of excitable membranes. Has an important role in repolarization and in regulating the pattern of action potential firing. Isoform a expresses currents in a more depolarized voltage range than isoform d. The polypeptide is Potassium voltage-gated channel protein shk-1 (Caenorhabditis elegans).